The chain runs to 308 residues: MEPLSAPLAVGFSAWPPSPPLPPLAHSPLQDAVHADHNHRRILNSCRNLPDCLTTTVPQLHQINSAEQSPLQFTHQPNCDLIVVLDEQTTYTTTMTRRSLPKADRYLSEPNMSTPQASHGSFEFDVPEYTSFDYAFDFPPVPEAFPPAANSSSAASPDADFLDLDSLMSCDITSLDAYIHDDSIASPSNASHISPPASDIDPVDEFFPQLVHNNKIQSSSSSTVETTITRGRKTSSVSSDSSSDYRHKRDKNNLASQKSRQKRQAKIRESKEERERLEKRKVQLQAMVLTLETQVEDYKRLVMMFVKR.

Residues 217 to 229 (QSSSSSTVETTIT) are compositionally biased toward polar residues. Positions 217–277 (QSSSSSTVET…RESKEERERL (61 aa)) are disordered. Residues 242–305 (SSDYRHKRDK…EDYKRLVMMF (64 aa)) form the bZIP domain. A basic motif region spans residues 246–276 (RHKRDKNNLASQKSRQKRQAKIRESKEERER). Basic and acidic residues predominate over residues 266-277 (KIRESKEERERL). The tract at residues 277–291 (LEKRKVQLQAMVLTL) is leucine-zipper.

It belongs to the bZIP family. C/EBP subfamily. As to expression, expressed in the pharynx and throughout the intestine.

It localises to the nucleus. Functionally, transcription factor that binds to the promoter and the enhancer regions of target genes. May act together with the bZIP transcription factor, cebp-2. Involved in responding to mitochondrial damage. Plays a role in the delay of age-associated mitochondrial fragmentation and muscle decline. Has a protective role in response to infection by the Gram-negative bacterium P.aeruginosa. Required to prevent P.aeruginosa ToxA-mediated lethality. Required for the activation of several infection response genes including irg-1 and irg-2 following P.aeruginosa infection; target gene activation may involve effects of the bacterial toxin, ToxA, and perhaps other toxins. This chain is Transcription factor zip-2, found in Caenorhabditis elegans.